Consider the following 795-residue polypeptide: RalBP1-associated Eps domain-containing protein 1 (795 aa).

In terms of domain architecture, EH 1 spans 10–113; it reads EQKYYSDLFS…SKNEQESRLA (104 aa). The disordered stretch occupies residues 112 to 238; it reads LAASYSSDSE…NWVSFADTPP (127 aa). The span at 115 to 126 shows a compositional bias: polar residues; it reads SYSSDSENQGSY. Serine 145, serine 162, serine 166, and serine 170 each carry phosphoserine. The span at 156 to 168 shows a compositional bias: low complexity; the sequence is EQQEPVSPVVSPQ. A Phosphothreonine modification is found at threonine 173. Positions 205–216 are enriched in low complexity; that stretch reads GDAQAGSSAGDA. Phosphoserine is present on residues serine 272 and serine 273. The EH 2 domain occupies 285-374; it reads QRQYYVNQFK…ESLMPKLIDL (90 aa). Phosphotyrosine is present on tyrosine 288. The residue at position 307 (serine 307) is a Phosphoserine. The 36-residue stretch at 318–353 folds into the EF-hand domain; it reads LPILELSHIWELSDFDKDGALTLDEFCAAFHLVVAR. Positions 331, 333, 335, and 342 each coordinate Ca(2+). Disordered regions lie at residues 380–433 and 469–720; these read VGEQ…SSQT and ELKR…DEHT. Polar residues predominate over residues 407-433; the sequence is LNQTWPELNQSSEQWETFSERSSSSQT. Phosphoserine occurs at positions 475, 482, and 489. 2 stretches are compositionally biased toward polar residues: residues 497 to 518 and 525 to 542; these read INSS…SDSF and IGSS…SPDN. Serine 539 carries the post-translational modification Phosphoserine. A Phosphothreonine modification is found at threonine 543. Pro residues predominate over residues 543 to 553; that stretch reads TAPPPPPPRPQ. Serine 561 is subject to Phosphoserine. The span at 562 to 573 shows a compositional bias: polar residues; it reads LDMNRTFAVTTG. Positions 574–583 are enriched in low complexity; it reads QQQAGVVAHP. Positions 584–595 are enriched in pro residues; sequence PAVPPRPQPSQA. 2 stretches are compositionally biased toward polar residues: residues 611–622 and 681–692; these read THTSTSPQQIPE and ATNVPANVSKGT. Residues 651-795 form an interaction with RALBP1 region; sequence HPEVLPAEKA…LEQLRPFSHL (145 aa). Basic and acidic residues predominate over residues 707–720; it reads KSEDELRPDVDEHT. Serine 708 and serine 739 each carry phosphoserine. Residues 750–790 adopt a coiled-coil conformation; that stretch reads SIRRNKETNTVLARLNSELQQQLKDVLEERISLEVQLEQLR.

Homodimer (Potential). Interacts with RALBP1, CRK and GRB2. Binding to RALBP1 does not affect its Ral-binding activity. Forms a complex with the SH3 domains of CRK and GRB2 which may link it to an EGF-responsive tyrosine kinase. Interacts with RAB11FIP2. Interacts with AMPH, ITSN1 (via SH3 domains) and SGIP1; may be involved in clathrin-mediated endocytosis. In terms of processing, EGF stimulates phosphorylation on Tyr-residues. As to expression, expressed in all tissues examined. The highest level expression was found in the kidney and testis.

The protein resides in the membrane. It localises to the clathrin-coated pit. Its function is as follows. May coordinate the cellular actions of activated EGF receptors and Ral-GTPases. In Mus musculus (Mouse), this protein is RalBP1-associated Eps domain-containing protein 1 (Reps1).